The primary structure comprises 75 residues: Small ribosomal subunit protein eS28 (75 aa).

It belongs to the eukaryotic ribosomal protein eS28 family.

The sequence is that of Small ribosomal subunit protein eS28 from Methanococcus aeolicus (strain ATCC BAA-1280 / DSM 17508 / OCM 812 / Nankai-3).